The primary structure comprises 152 residues: D-aminoacyl-tRNA deacylase (152 aa).

Residues 142-143 (GP) carry the Gly-cisPro motif, important for rejection of L-amino acids motif.

The protein belongs to the DTD family. In terms of assembly, homodimer.

The protein localises to the cytoplasm. It catalyses the reaction glycyl-tRNA(Ala) + H2O = tRNA(Ala) + glycine + H(+). The enzyme catalyses a D-aminoacyl-tRNA + H2O = a tRNA + a D-alpha-amino acid + H(+). An aminoacyl-tRNA editing enzyme that deacylates mischarged D-aminoacyl-tRNAs. Also deacylates mischarged glycyl-tRNA(Ala), protecting cells against glycine mischarging by AlaRS. Acts via tRNA-based rather than protein-based catalysis; rejects L-amino acids rather than detecting D-amino acids in the active site. By recycling D-aminoacyl-tRNA to D-amino acids and free tRNA molecules, this enzyme counteracts the toxicity associated with the formation of D-aminoacyl-tRNA entities in vivo and helps enforce protein L-homochirality. The protein is D-aminoacyl-tRNA deacylase of Burkholderia cenocepacia (strain HI2424).